The following is a 280-amino-acid chain: 4-diphosphocytidyl-2-C-methyl-D-erythritol kinase (280 aa).

The active site involves lysine 9. Position 92–102 (92–102) interacts with ATP; sequence PMGGGLGGGSS. The active site involves aspartate 134.

This sequence belongs to the GHMP kinase family. IspE subfamily.

It catalyses the reaction 4-CDP-2-C-methyl-D-erythritol + ATP = 4-CDP-2-C-methyl-D-erythritol 2-phosphate + ADP + H(+). It functions in the pathway isoprenoid biosynthesis; isopentenyl diphosphate biosynthesis via DXP pathway; isopentenyl diphosphate from 1-deoxy-D-xylulose 5-phosphate: step 3/6. In terms of biological role, catalyzes the phosphorylation of the position 2 hydroxy group of 4-diphosphocytidyl-2C-methyl-D-erythritol. The polypeptide is 4-diphosphocytidyl-2-C-methyl-D-erythritol kinase (Nitrosococcus oceani (strain ATCC 19707 / BCRC 17464 / JCM 30415 / NCIMB 11848 / C-107)).